The chain runs to 123 residues: U7 snRNA-associated Sm-like protein LSm10 (123 aa).

The Sm domain maps to S16–V88.

This sequence belongs to the snRNP Sm proteins family. Component of the heptameric ring U7 snRNP complex, or U7 Sm protein core complex, at least composed of LSM10, LSM11, SNRPB, SNRPD3, SNRPE, SNRPF, SNRPG and U7 snRNA. Formation of the U7 snRNP is an ATP-dependent process mediated by a specialized SMN complex containing at least the Sm protein core complex and additionally, the U7-specific LSM10 and LSM11 proteins. Interacts with CLNS1A and SMN. Not methylated. Methylation is not necessary for interaction with SMN.

Its subcellular location is the nucleus. Functionally, appears to function in the U7 snRNP complex that is involved in histone 3'-end processing. Increases U7 snRNA levels but not histone 3'-end pre-mRNA processing activity, when overexpressed. Required for cell cycle progression from G1 to S phases. Binds specifically to U7 snRNA. Binds to the downstream cleavage product (DCP) of histone pre-mRNA in a U7 snRNP dependent manner. The protein is U7 snRNA-associated Sm-like protein LSm10 (LSM10) of Homo sapiens (Human).